A 182-amino-acid polypeptide reads, in one-letter code: MRVLGIDPGLTRCGIGVVDGAVGAPLTMVAAGAVRTLADEELPARLLGIEKGIEQWLDDYQPDAVAVERVFAQHNVRTVMGTAQASAIAVVCAARRGLPVSLHTPSEVKAAITGSGRADKAQVGTMVARILRLDSPPRPADAADAVALAICYLWRGSAQERIARARQKFARTIELARQRHGL.

Catalysis depends on residues D7, E68, and D141. D7, E68, and D141 together coordinate Mg(2+).

Belongs to the RuvC family. Homodimer which binds Holliday junction (HJ) DNA. The HJ becomes 2-fold symmetrical on binding to RuvC with unstacked arms; it has a different conformation from HJ DNA in complex with RuvA. In the full resolvosome a probable DNA-RuvA(4)-RuvB(12)-RuvC(2) complex forms which resolves the HJ. It depends on Mg(2+) as a cofactor.

It is found in the cytoplasm. It carries out the reaction Endonucleolytic cleavage at a junction such as a reciprocal single-stranded crossover between two homologous DNA duplexes (Holliday junction).. In terms of biological role, the RuvA-RuvB-RuvC complex processes Holliday junction (HJ) DNA during genetic recombination and DNA repair. Endonuclease that resolves HJ intermediates. Cleaves cruciform DNA by making single-stranded nicks across the HJ at symmetrical positions within the homologous arms, yielding a 5'-phosphate and a 3'-hydroxyl group; requires a central core of homology in the junction. The consensus cleavage sequence is 5'-(A/T)TT(C/G)-3'. Cleavage occurs on the 3'-side of the TT dinucleotide at the point of strand exchange. HJ branch migration catalyzed by RuvA-RuvB allows RuvC to scan DNA until it finds its consensus sequence, where it cleaves and resolves the cruciform DNA. The sequence is that of Crossover junction endodeoxyribonuclease RuvC from Thermobifida fusca (strain YX).